The chain runs to 106 residues: Programmed cell death activator egl-1 (106 aa).

Residues 73 to 81 (LAAMCDDFD) are BH3-like.

As to quaternary structure, interacts with ced-9; the interaction results in ced-4 release from the ced-4/ced-9 complex. Interaction with ced-9 may enhance interaction of ced-9 with drp-1, but not with ced-4. A ced-9/egl-1 complex may recruit drp-1 to the mitochondrial surface.

It is found in the synapse. Plays a major role in programmed cell death (PCD or apoptosis) by negatively regulating ced-9. Binds to and directly inhibits the activity of ced-9, releasing the cell death activator ced-4 from a ced-9/ced-4 containing protein complex and allowing ced-4 to activate the cell-killing caspase ced-3. Required to activate programmed cell death in the sister cells of the serotonergic neurosecretory motor (NSM) neurons during embryogenesis. Required to activate programmed cell death in the sister cells of the M4 motor neuron and I1 pharyngeal neuron during embryogenesis. During larval development, required for the elimination of transient presynaptic components upstream of ced-9, ced-4 and ced-3 apoptotic pathway. Together with ain-1, a component of the miRNA-induced-silencing complex (miRISC), and probably upstream of ced-3 and ced-4, regulates temporal cell fate patterning during larval development. Has been shown in two studies to be dispensable in mitochondrial dynamics and morphology during early embryonic development. However, one study shows that during larval development, egl-1 is involved in modulating mitochondrial dynamics, perhaps acting by stabilizing the interaction between ced-9 and drp-1 in order to promote mitochondrial fission. Involved in inducing mitochondrial fragmentation during apoptosis, probably acting via ced-9 and dynamin-related protein drp-1. The sequence is that of Programmed cell death activator egl-1 from Caenorhabditis elegans.